The following is a 223-amino-acid chain: Endonuclease III (223 aa).

One can recognise a HhH domain in the interval 118–137 (RDFLTAIEGIGDKTADVVLL). Cys-198, Cys-205, Cys-208, and Cys-214 together coordinate [4Fe-4S] cluster.

Belongs to the Nth/MutY family. [4Fe-4S] cluster serves as cofactor.

The catalysed reaction is 2'-deoxyribonucleotide-(2'-deoxyribose 5'-phosphate)-2'-deoxyribonucleotide-DNA = a 3'-end 2'-deoxyribonucleotide-(2,3-dehydro-2,3-deoxyribose 5'-phosphate)-DNA + a 5'-end 5'-phospho-2'-deoxyribonucleoside-DNA + H(+). Functionally, probably part of a 4-gene DNA damage response locus in which the upstream ups system, in combination with this downstream locus, functions in homologous recombination to rescue Sulfolobales from DNA-damaging threats. DNA repair enzyme that has both DNA N-glycosylase activity and AP-lyase activity. The DNA N-glycosylase activity releases various damaged pyrimidines from DNA by cleaving the N-glycosidic bond, leaving an AP (apurinic/apyrimidinic) site. The AP-lyase activity cleaves the phosphodiester bond 3' to the AP site by a beta-elimination, leaving a 3'-terminal unsaturated sugar and a product with a terminal 5'-phosphate. Nicks UV-treated plasmid DNA in a dose-dependent manner, has no activity on untreated DNA. The protein is Endonuclease III of Sulfolobus acidocaldarius (strain ATCC 33909 / DSM 639 / JCM 8929 / NBRC 15157 / NCIMB 11770).